Reading from the N-terminus, the 1108-residue chain is Transmembrane protein 132C (1108 aa).

The signal sequence occupies residues 1–27; that stretch reads MRSEGAAPGPAAPLCGALSLLLGALLG. At 28-922 the chain is on the extracellular side; that stretch reads KVIEGHGVTD…LVQTPRGLSD (895 aa). Residues Asn-316 and Asn-373 are each glycosylated (N-linked (GlcNAc...) asparagine). A compositionally biased stretch (basic and acidic residues) spans 820–836; the sequence is HASDRRQKGQHHERTGQ. The disordered stretch occupies residues 820-857; that stretch reads HASDRRQKGQHHERTGQDGHLYGSSPVEREEGALRRAT. A helical transmembrane segment spans residues 923 to 943; the sequence is LEIGMYALLGVFCLAILVFLI. Residues 944 to 1108 lie on the Cytoplasmic side of the membrane; that stretch reads NCATFALKYR…NYLEKLKDKA (165 aa). The interval 1022–1072 is disordered; it reads QSQIHRSADSGGRQGREQKQDPLHSPTSKRKKVKFTTFTTIPPDDSCPTVN.

Belongs to the TMEM132 family.

It localises to the membrane. This is Transmembrane protein 132C (TMEM132C) from Homo sapiens (Human).